The following is a 726-amino-acid chain: Pyrroloquinoline quinone-dependent pyranose dehydrogenase (726 aa).

The signal sequence occupies residues 1–18 (MRSSSLAWALGLVALANA). Heme b-binding residues include methionine 83 and tyrosine 108. Residues cysteine 138 and cysteine 141 are joined by a disulfide bond. Asparagine 140 is a glycosylation site (N-linked (GlcNAc...) asparagine). Arginine 181 and histidine 182 together coordinate heme b. Positions 211–242 (PPLSGGAPTQPPTQQPPTTTAPPPPPPSSTFV) are disordered. The segment covering 219–238 (TQPPTQQPPTTTAPPPPPPS) has biased composition (pro residues). Cysteines 244 and 302 form a disulfide. Pyrroloquinoline quinone-binding residues include arginine 273, histidine 363, arginine 430, and asparagine 431. Positions 449 and 451 each coordinate Ca(2+). A disulfide bridge connects residues cysteine 492 and cysteine 525. Residue histidine 539 coordinates pyrroloquinoline quinone. The N-linked (GlcNAc...) asparagine glycan is linked to asparagine 551. Positions 560, 563, and 564 each coordinate pyrroloquinoline quinone. Cysteine 611 and cysteine 619 are joined by a disulfide. Arginine 621 contacts pyrroloquinoline quinone. A compositionally biased stretch (pro residues) spans 659–678 (ITQPPITTSPPTPTTPPVVQ). The segment at 659-689 (ITQPPITTSPPTPTTPPVVQPPTTVAPPQAS) is disordered. Low complexity predominate over residues 679 to 689 (PPTTVAPPQAS). Residues 688-724 (ASQTLWGQCGGQGWTGPTLCPANSVCRESNQWYSQCV) form the CBM1 domain.

It belongs to the sugar dehydrogenase AA12 family. Ca(2+) is required as a cofactor. Pyrroloquinoline quinone serves as cofactor. The cofactor is heme b.

It localises to the secreted. Functionally, pyrroloquinoline quinone (PPQ)-dependent oxidoreductase that catalyzes the oxidation of various sugars including L-galactose, L-gulose, D-talose, D-arabinose, D-lyxose, L-fucose and D-glucosone. Shows significant activity toward the reverse-chair conformation of pyranoses. Shows little or no activity toward abundant sugars such as D-glucose, D-fructose, cellobiose, as well L-xylose and L-glucose. This enzyme is able to direct electrical communication with electrodes, without artificial electron mediators, thus allowing direct electron transfer (DET)-type bioelectrocatalysis. Exhibits binding affinity for insoluble cellulose. PDH does not oxidize cello-oligosaccharides but is able to activate the C-1-oxidizing Neurospora crassa LPMO9F and the C-4-oxidizing Neurospora crassa LPMO9C thanks to the electron-tranfer activity of the cytochrome domain and the localization of PDH in the vicinity of the LPMO substrates by the CBM1 domain. The polypeptide is Pyrroloquinoline quinone-dependent pyranose dehydrogenase (Coprinopsis cinerea (strain Okayama-7 / 130 / ATCC MYA-4618 / FGSC 9003) (Inky cap fungus)).